A 334-amino-acid polypeptide reads, in one-letter code: Holliday junction branch migration complex subunit RuvB (334 aa).

The tract at residues 1 to 180 is large ATPase domain (RuvB-L); the sequence is MSEFLTPERT…FGIILELDFY (180 aa). Residues Leu19, Arg20, Gly61, Lys64, Thr65, Thr66, 127-129, Arg170, Tyr180, and Arg217 each bind ATP; that span reads EDF. A Mg(2+)-binding site is contributed by Thr65. The segment at 181 to 251 is small ATPAse domain (RuvB-S); that stretch reads TVKELKEIIK…IVLKTMEVLN (71 aa). The segment at 254–334 is head domain (RuvB-H); the sequence is AEGLDEFDRK…KYEVPENRLF (81 aa). DNA-binding residues include Arg309 and Arg314.

Belongs to the RuvB family. As to quaternary structure, homohexamer. Forms an RuvA(8)-RuvB(12)-Holliday junction (HJ) complex. HJ DNA is sandwiched between 2 RuvA tetramers; dsDNA enters through RuvA and exits via RuvB. An RuvB hexamer assembles on each DNA strand where it exits the tetramer. Each RuvB hexamer is contacted by two RuvA subunits (via domain III) on 2 adjacent RuvB subunits; this complex drives branch migration. In the full resolvosome a probable DNA-RuvA(4)-RuvB(12)-RuvC(2) complex forms which resolves the HJ.

It is found in the cytoplasm. It catalyses the reaction ATP + H2O = ADP + phosphate + H(+). In terms of biological role, the RuvA-RuvB-RuvC complex processes Holliday junction (HJ) DNA during genetic recombination and DNA repair, while the RuvA-RuvB complex plays an important role in the rescue of blocked DNA replication forks via replication fork reversal (RFR). RuvA specifically binds to HJ cruciform DNA, conferring on it an open structure. The RuvB hexamer acts as an ATP-dependent pump, pulling dsDNA into and through the RuvAB complex. RuvB forms 2 homohexamers on either side of HJ DNA bound by 1 or 2 RuvA tetramers; 4 subunits per hexamer contact DNA at a time. Coordinated motions by a converter formed by DNA-disengaged RuvB subunits stimulates ATP hydrolysis and nucleotide exchange. Immobilization of the converter enables RuvB to convert the ATP-contained energy into a lever motion, pulling 2 nucleotides of DNA out of the RuvA tetramer per ATP hydrolyzed, thus driving DNA branch migration. The RuvB motors rotate together with the DNA substrate, which together with the progressing nucleotide cycle form the mechanistic basis for DNA recombination by continuous HJ branch migration. Branch migration allows RuvC to scan DNA until it finds its consensus sequence, where it cleaves and resolves cruciform DNA. In Thermotoga petrophila (strain ATCC BAA-488 / DSM 13995 / JCM 10881 / RKU-1), this protein is Holliday junction branch migration complex subunit RuvB.